Reading from the N-terminus, the 104-residue chain is Large ribosomal subunit protein bL21 (104 aa).

Belongs to the bacterial ribosomal protein bL21 family. Part of the 50S ribosomal subunit. Contacts protein L20.

This protein binds to 23S rRNA in the presence of protein L20. This chain is Large ribosomal subunit protein bL21, found in Francisella tularensis subsp. tularensis (strain FSC 198).